The chain runs to 203 residues: Recombination protein RecR (203 aa).

The C4-type zinc finger occupies 56–71 (CAVCGNVSDDERCRIC). The Toprim domain occupies 79 to 179 (ALVCVVEEPK…TVTRIASGLP (101 aa)).

The protein belongs to the RecR family.

In terms of biological role, may play a role in DNA repair. It seems to be involved in an RecBC-independent recombinational process of DNA repair. It may act with RecF and RecO. The polypeptide is Recombination protein RecR (Mycobacterium ulcerans (strain Agy99)).